The sequence spans 468 residues: Zinc finger CCCH domain-containing protein 32 (468 aa).

The interval 1-25 is disordered; the sequence is MYARNPPLNGSQSAQAPDWTPADAD. 5 C3H1-type zinc fingers span residues 45–73, 90–118, 136–164, 289–317, and 335–363; these read RPGAPDCAYYMRTGVCGYGNRCRYNHPRD, RFGEPPCQFYLKTGTCKFGASCKFHHPKN, REGDNECSYYLKTGQCKFGITCKFHHPQP, RPGEPECQYYLKTGDCKFGTSCKFHHPRD, and RPGVQRCTFYVQNGFCKFGSTCKFDHPMG.

It is found in the nucleus. This Arabidopsis thaliana (Mouse-ear cress) protein is Zinc finger CCCH domain-containing protein 32.